The following is a 134-amino-acid chain: Transmembrane protein 100 (134 aa).

2 helical membrane passes run 56–76 and 84–104; these read CIIP…AVAY and IISI…ASSA. S121 is subject to Phosphoserine.

As to quaternary structure, interacts (via C-terminus) with TRPA1 and TRPV1. Interacts with TASOR. As to expression, expressed in neurons of the myenteric and submucosal plexuses in the gastric body, jejunum and proximal colon. Expressed in arterial endothelial cells and neurons of the central nervous system and peripheral nervous system. Expressed in umbilical artery endothelial cells (at protein level).

The protein localises to the cell membrane. It localises to the membrane. It is found in the perikaryon. Its subcellular location is the cytoplasm. The protein resides in the perinuclear region. The protein localises to the endoplasmic reticulum. Plays a role during embryonic arterial endothelium differentiation and vascular morphogenesis through the ACVRL1 receptor-dependent signaling pathway upon stimulation by bone morphogenetic proteins, such as GDF2/BMP9 and BMP10. Involved in the regulation of nociception, acting as a modulator of the interaction between TRPA1 and TRPV1, two molecular sensors and mediators of pain signals in dorsal root ganglia (DRG) neurons. Mechanistically, it weakens their interaction, thereby releasing the inhibition of TRPA1 by TRPV1 and increasing the single-channel open probability of the TRPA1-TRPV1 complex. The sequence is that of Transmembrane protein 100 (TMEM100) from Homo sapiens (Human).